Consider the following 192-residue polypeptide: Thymidine kinase (192 aa).

Residues 9–16 (SAMNAGKS) and 87–90 (DECQ) each bind ATP. Glu-88 functions as the Proton acceptor in the catalytic mechanism. Positions 145, 147, 182, and 185 each coordinate Zn(2+).

The protein belongs to the thymidine kinase family. As to quaternary structure, homotetramer.

It is found in the cytoplasm. The enzyme catalyses thymidine + ATP = dTMP + ADP + H(+). The protein is Thymidine kinase of Shewanella oneidensis (strain ATCC 700550 / JCM 31522 / CIP 106686 / LMG 19005 / NCIMB 14063 / MR-1).